A 338-amino-acid polypeptide reads, in one-letter code: Ketol-acid reductoisomerase (NADP(+)) (338 aa).

Positions 1–181 (MKVFYDKDCD…GGGRAGIIET (181 aa)) constitute a KARI N-terminal Rossmann domain. Residues 24–27 (YGSQ), arginine 47, and serine 52 contribute to the NADP(+) site. Histidine 107 is a catalytic residue. Glycine 133 lines the NADP(+) pocket. One can recognise a KARI C-terminal knotted domain in the interval 182-327 (DFREETETDL…GKLRAMMPWI (146 aa)). Mg(2+) contacts are provided by aspartate 190, glutamate 194, glutamate 226, and glutamate 230. Residue serine 251 participates in substrate binding.

This sequence belongs to the ketol-acid reductoisomerase family. The cofactor is Mg(2+).

It catalyses the reaction (2R)-2,3-dihydroxy-3-methylbutanoate + NADP(+) = (2S)-2-acetolactate + NADPH + H(+). The catalysed reaction is (2R,3R)-2,3-dihydroxy-3-methylpentanoate + NADP(+) = (S)-2-ethyl-2-hydroxy-3-oxobutanoate + NADPH + H(+). It participates in amino-acid biosynthesis; L-isoleucine biosynthesis; L-isoleucine from 2-oxobutanoate: step 2/4. Its pathway is amino-acid biosynthesis; L-valine biosynthesis; L-valine from pyruvate: step 2/4. Functionally, involved in the biosynthesis of branched-chain amino acids (BCAA). Catalyzes an alkyl-migration followed by a ketol-acid reduction of (S)-2-acetolactate (S2AL) to yield (R)-2,3-dihydroxy-isovalerate. In the isomerase reaction, S2AL is rearranged via a Mg-dependent methyl migration to produce 3-hydroxy-3-methyl-2-ketobutyrate (HMKB). In the reductase reaction, this 2-ketoacid undergoes a metal-dependent reduction by NADPH to yield (R)-2,3-dihydroxy-isovalerate. This chain is Ketol-acid reductoisomerase (NADP(+)), found in Bordetella petrii (strain ATCC BAA-461 / DSM 12804 / CCUG 43448).